The chain runs to 509 residues: Cytochrome P450 monooxygenase cpaH (509 aa).

Asn-15 carries N-linked (GlcNAc...) asparagine glycosylation. Residues 31 to 51 traverse the membrane as a helical segment; sequence TTILLIGVTYCILVGIYRVTL. 2 N-linked (GlcNAc...) asparagine glycosylation sites follow: Asn-306 and Asn-412. Cys-453 provides a ligand contact to heme.

Belongs to the cytochrome P450 family. Heme is required as a cofactor.

The protein resides in the membrane. It functions in the pathway secondary metabolite biosynthesis. Functionally, cytochrome P450 monooxygenase; part of the gene cluster that mediates the biosynthesis of the fungal neurotoxin cyclopiazonic acid (CPA), a nanomolar inhibitor of Ca(2+)-ATPase with a unique pentacyclic indole tetramic acid scaffold. The hybrid two module polyketide synthase-nonribosomal peptide synthetase (PKS-NRPS) cpaS incorporates acetyl-CoA, malonyl-CoA, and tryptophan (Trp) and utilizes a C-terminal redox-incompetent reductase domain to make and release the tryptophan tetramic acid, cyclo-acetoacetyl-L-tryptophan (c-AATrp), as the first intermediate in the pathway. CpaS catalyzes a Dieckmann-type cyclization on the N-acetoacetyl-Trp intermediate bound in thioester linkage to the phosphopantetheinyl arm of the T domain to form and release c-AATrp. CpaD then regiospecifically dimethylallylates c-AATrp to form beta-cyclopiazonic acid. CpaD discriminates against free Trp but accepts tryptophan-containing thiohydantoins, diketopiperazines, and linear peptides as substrates for C4-prenylation and also acts as a regiospecific O-dimethylallyltransferase (DMAT) on a tyrosine-derived tetramic acid. The beta-cyclopiazonate dehydrogenase cpaO then carries out the dehydrogenation of beta-CPA to yield an unstable enimine product, which is captured by intramolecular cyclization to create the pentacyclic fused scaffold of alpha-cyclopiazonate. Finally, the cytochrome P450 monooxygenase cpaH mediates the conversion of CPA into the less toxic 2-oxocyclopiazonic acid, the end product of the CPA pathway in A.oryza. The sequence is that of Cytochrome P450 monooxygenase cpaH from Aspergillus oryzae (Yellow koji mold).